A 529-amino-acid polypeptide reads, in one-letter code: Bifunctional purine biosynthesis protein PurH (529 aa).

The region spanning 1–148 (MQQRRPVRRA…KNHKDVAIVV (148 aa)) is the MGS-like domain.

It belongs to the PurH family.

The enzyme catalyses (6R)-10-formyltetrahydrofolate + 5-amino-1-(5-phospho-beta-D-ribosyl)imidazole-4-carboxamide = 5-formamido-1-(5-phospho-D-ribosyl)imidazole-4-carboxamide + (6S)-5,6,7,8-tetrahydrofolate. It catalyses the reaction IMP + H2O = 5-formamido-1-(5-phospho-D-ribosyl)imidazole-4-carboxamide. Its pathway is purine metabolism; IMP biosynthesis via de novo pathway; 5-formamido-1-(5-phospho-D-ribosyl)imidazole-4-carboxamide from 5-amino-1-(5-phospho-D-ribosyl)imidazole-4-carboxamide (10-formyl THF route): step 1/1. It functions in the pathway purine metabolism; IMP biosynthesis via de novo pathway; IMP from 5-formamido-1-(5-phospho-D-ribosyl)imidazole-4-carboxamide: step 1/1. This chain is Bifunctional purine biosynthesis protein PurH, found in Salmonella schwarzengrund (strain CVM19633).